Here is a 79-residue protein sequence, read N- to C-terminus: Acyl carrier protein (79 aa).

The Carrier domain maps to 2 to 77; sequence SDIAERVKKI…DAVKFLEKNS (76 aa). Serine 37 bears the O-(pantetheine 4'-phosphoryl)serine mark.

This sequence belongs to the acyl carrier protein (ACP) family. In terms of processing, 4'-phosphopantetheine is transferred from CoA to a specific serine of apo-ACP by AcpS. This modification is essential for activity because fatty acids are bound in thioester linkage to the sulfhydryl of the prosthetic group.

The protein localises to the cytoplasm. Its pathway is lipid metabolism; fatty acid biosynthesis. Functionally, carrier of the growing fatty acid chain in fatty acid biosynthesis. In Methylobacterium radiotolerans (strain ATCC 27329 / DSM 1819 / JCM 2831 / NBRC 15690 / NCIMB 10815 / 0-1), this protein is Acyl carrier protein.